The primary structure comprises 311 residues: Porphobilinogen deaminase (311 aa).

Residue C240 is modified to S-(dipyrrolylmethanemethyl)cysteine.

The protein belongs to the HMBS family. In terms of assembly, monomer. Requires dipyrromethane as cofactor.

The catalysed reaction is 4 porphobilinogen + H2O = hydroxymethylbilane + 4 NH4(+). It participates in porphyrin-containing compound metabolism; protoporphyrin-IX biosynthesis; coproporphyrinogen-III from 5-aminolevulinate: step 2/4. In terms of biological role, tetrapolymerization of the monopyrrole PBG into the hydroxymethylbilane pre-uroporphyrinogen in several discrete steps. The sequence is that of Porphobilinogen deaminase from Natranaerobius thermophilus (strain ATCC BAA-1301 / DSM 18059 / JW/NM-WN-LF).